The primary structure comprises 352 residues: Protein-glutamate methylesterase/protein-glutamine glutaminase (352 aa).

The 118-residue stretch at 4 to 121 folds into the Response regulatory domain; it reads RVLIVDDSAT…YDGIDEIQKE (118 aa). D55 is subject to 4-aspartylphosphate. One can recognise a CheB-type methylesterase domain in the interval 159 to 351; the sequence is AQTTNKLIAI…VKIASLLSER (193 aa). Active-site residues include S171, H197, and D293.

The protein belongs to the CheB family. Phosphorylated by CheA. Phosphorylation of the N-terminal regulatory domain activates the methylesterase activity.

The protein localises to the cytoplasm. The catalysed reaction is [protein]-L-glutamate 5-O-methyl ester + H2O = L-glutamyl-[protein] + methanol + H(+). It catalyses the reaction L-glutaminyl-[protein] + H2O = L-glutamyl-[protein] + NH4(+). Functionally, involved in chemotaxis. Part of a chemotaxis signal transduction system that modulates chemotaxis in response to various stimuli. Catalyzes the demethylation of specific methylglutamate residues introduced into the chemoreceptors (methyl-accepting chemotaxis proteins or MCP) by CheR. Also mediates the irreversible deamidation of specific glutamine residues to glutamic acid. The protein is Protein-glutamate methylesterase/protein-glutamine glutaminase of Sulfurimonas denitrificans (strain ATCC 33889 / DSM 1251) (Thiomicrospira denitrificans (strain ATCC 33889 / DSM 1251)).